The following is a 489-amino-acid chain: UDP-N-acetylmuramate--L-alanine ligase (489 aa).

128–134 contacts ATP; the sequence is GTHGKTT.

The protein belongs to the MurCDEF family.

The protein localises to the cytoplasm. It catalyses the reaction UDP-N-acetyl-alpha-D-muramate + L-alanine + ATP = UDP-N-acetyl-alpha-D-muramoyl-L-alanine + ADP + phosphate + H(+). It participates in cell wall biogenesis; peptidoglycan biosynthesis. In terms of biological role, cell wall formation. This chain is UDP-N-acetylmuramate--L-alanine ligase, found in Shewanella pealeana (strain ATCC 700345 / ANG-SQ1).